A 779-amino-acid chain; its full sequence is Phosphoribosylformylglycinamidine synthase subunit PurL (779 aa).

H52 is a catalytic residue. The ATP site is built by Y55 and K94. Position 96 (E96) interacts with Mg(2+). Substrate contacts are provided by residues 97–100 (SHNH) and R119. The Proton acceptor role is filled by H98. A Mg(2+)-binding site is contributed by D120. Q243 serves as a coordination point for substrate. D271 lines the Mg(2+) pocket. 315–317 (ESQ) contacts substrate. The ATP site is built by N523 and G560. Position 561 (N561) interacts with Mg(2+). S563 lines the substrate pocket.

It belongs to the FGAMS family. Monomer. Part of the FGAM synthase complex composed of 1 PurL, 1 PurQ and 2 PurS subunits.

It localises to the cytoplasm. The enzyme catalyses N(2)-formyl-N(1)-(5-phospho-beta-D-ribosyl)glycinamide + L-glutamine + ATP + H2O = 2-formamido-N(1)-(5-O-phospho-beta-D-ribosyl)acetamidine + L-glutamate + ADP + phosphate + H(+). Its pathway is purine metabolism; IMP biosynthesis via de novo pathway; 5-amino-1-(5-phospho-D-ribosyl)imidazole from N(2)-formyl-N(1)-(5-phospho-D-ribosyl)glycinamide: step 1/2. Its function is as follows. Part of the phosphoribosylformylglycinamidine synthase complex involved in the purines biosynthetic pathway. Catalyzes the ATP-dependent conversion of formylglycinamide ribonucleotide (FGAR) and glutamine to yield formylglycinamidine ribonucleotide (FGAM) and glutamate. The FGAM synthase complex is composed of three subunits. PurQ produces an ammonia molecule by converting glutamine to glutamate. PurL transfers the ammonia molecule to FGAR to form FGAM in an ATP-dependent manner. PurS interacts with PurQ and PurL and is thought to assist in the transfer of the ammonia molecule from PurQ to PurL. The sequence is that of Phosphoribosylformylglycinamidine synthase subunit PurL from Prochlorococcus marinus (strain MIT 9515).